Reading from the N-terminus, the 228-residue chain is Mediator of RNA polymerase II transcription subunit 7-B (228 aa).

The protein belongs to the Mediator complex subunit 7 family. Component of the Mediator complex.

Its subcellular location is the nucleus. In terms of biological role, component of the Mediator complex, a coactivator involved in the regulated transcription of nearly all RNA polymerase II-dependent genes. Mediator functions as a bridge to convey information from gene-specific regulatory proteins to the basal RNA polymerase II transcription machinery. Mediator is recruited to promoters by direct interactions with regulatory proteins and serves as a scaffold for the assembly of a functional preinitiation complex with RNA polymerase II and the general transcription factors. The sequence is that of Mediator of RNA polymerase II transcription subunit 7-B (med7-b) from Xenopus laevis (African clawed frog).